We begin with the raw amino-acid sequence, 315 residues long: Olfactory receptor 4A8 (315 aa).

Topologically, residues 1–24 (MRQNNNITEFVLLGFSQYPDVQNA) are extracellular. Residue Asn-6 is glycosylated (N-linked (GlcNAc...) asparagine). A helical membrane pass occupies residues 25–45 (LFVMFLLIYIVTMVGNLLIVV). Residues 46 to 57 (SIIASPFLGSPV) lie on the Cytoplasmic side of the membrane. Residues 58–80 (YFFLACLSFIDAVYSTTISPVLI) form a helical membrane-spanning segment. The Extracellular portion of the chain corresponds to 81–95 (VDLLCDKKTISFPAC). An intrachain disulfide couples Cys-95 to Cys-177. Residues 96-116 (MGQLFIEHLFGDTDVFLLVVM) form a helical membrane-spanning segment. Over 117 to 139 (AYDRYVATCKPLRYLTIMNRQVC) the chain is Cytoplasmic. A helical membrane pass occupies residues 140 to 160 (ILLLVVAVTGGFLHSVFQILV). At 161-193 (VYSLPFCGPNVIYHFFCNIYPLLDLECTDTYFV) the chain is on the extracellular side. The helical transmembrane segment at 194-214 (GLAVVFNGGAICMVIFTLLLI) threads the bilayer. The Cytoplasmic segment spans residues 215-235 (SYGVILNSLKTYSPEGRHKAP). A helical transmembrane segment spans residues 236 to 256 (FICSSHFIMVILFFVPCIFLY). The Extracellular segment spans residues 257–266 (VRPVSNFPID). Residues 267 to 287 (KFLTVFYSVITPKLNPFIYML) traverse the membrane as a helical segment. Residues 288-315 (RNSEMRNAIENLLGYQSGKTGFRCSKLN) lie on the Cytoplasmic side of the membrane.

The protein belongs to the G-protein coupled receptor 1 family.

The protein resides in the cell membrane. Odorant receptor. The chain is Olfactory receptor 4A8 (OR4A8) from Homo sapiens (Human).